A 202-amino-acid chain; its full sequence is Dephospho-CoA kinase (202 aa).

Residues 4–202 (FLGLTGGIAT…EGVCHKSGMS (199 aa)) form the DPCK domain. 12–17 (ATGKTT) contributes to the ATP binding site.

Belongs to the CoaE family.

It localises to the cytoplasm. It catalyses the reaction 3'-dephospho-CoA + ATP = ADP + CoA + H(+). The protein operates within cofactor biosynthesis; coenzyme A biosynthesis; CoA from (R)-pantothenate: step 5/5. In terms of biological role, catalyzes the phosphorylation of the 3'-hydroxyl group of dephosphocoenzyme A to form coenzyme A. In Latilactobacillus sakei subsp. sakei (strain 23K) (Lactobacillus sakei subsp. sakei), this protein is Dephospho-CoA kinase.